We begin with the raw amino-acid sequence, 140 residues long: Zinc finger SWIM domain-containing protein 7 (140 aa).

The SWIM-type zinc finger occupies 66–114 (YQVLGSSSKTYTCLASCHYCSCPAFAFSVLRKSDSILCKHLLAVYLSQV).

The protein belongs to the SWS1 family. As to quaternary structure, interacts with RAD51D and XRCC3; involved in homologous recombination repair. Interacts with SWSAP1; they form a functional complex involved in homologous recombination repair and stabilize each other. Expressed in ovary and testis.

It is found in the nucleus. Involved in early stages of the homologous recombination repair (HRR) pathway of double-stranded DNA breaks arising during DNA replication or induced by DNA-damaging agents. Required for meiotic progression, hence for fertility. This Homo sapiens (Human) protein is Zinc finger SWIM domain-containing protein 7 (ZSWIM7).